The primary structure comprises 1863 residues: Breast cancer type 1 susceptibility protein (1863 aa).

The residue at position 1 (Met-1) is an N-acetylmethionine. The RING-type zinc-finger motif lies at 24 to 65 (CPICLELIKEPVSTKCDHIFCKFCMLKLLNQKKGPSQCPLCK). Residue Lys-109 forms a Glycyl lysine isopeptide (Lys-Gly) (interchain with G-Cter in SUMO2) linkage. A Phosphoserine modification is found at Ser-114. Residues 230–270 (ETDVTNTEHHQPSNNDLNTTEKRAAERHPEKYQGSSVSNLH) are disordered. Residues 248–260 (TTEKRAAERHPEK) show a composition bias toward basic and acidic residues. Lys-301 is covalently cross-linked (Glycyl lysine isopeptide (Lys-Gly) (interchain with G-Cter in SUMO2)). The tract at residues 306 to 338 (NKSKQPGLARSQHNRWAGSKETCNDRRTPSTEK) is disordered. The span at 327–338 (TCNDRRTPSTEK) shows a compositional bias: basic and acidic residues. Residue Lys-339 forms a Glycyl lysine isopeptide (Lys-Gly) (interchain with G-Cter in SUMO2) linkage. Phosphoserine occurs at positions 395, 398, 423, and 434. Glycyl lysine isopeptide (Lys-Gly) (interchain with G-Cter in SUMO2) cross-links involve residues Lys-443, Lys-459, and Lys-519. The segment covering 534–544 (QGTNQTEQNGQ) has biased composition (low complexity). The tract at residues 534–570 (QGTNQTEQNGQVMNITNSGHENKTKGDSIQNEKNPNP) is disordered. Ser-551 bears the Phosphoserine mark. Glycyl lysine isopeptide (Lys-Gly) (interchain with G-Cter in SUMO2) cross-links involve residues Lys-583 and Lys-654. The segment at 654-709 (KYNQMPVRHSRNLQLMEGKEPATGAKKSNKPNEQTSKRHDSDTFPELKLTNAPGSF) is disordered. A phosphoserine mark is found at Ser-694, Ser-708, and Ser-725. Glycyl lysine isopeptide (Lys-Gly) (interchain with G-Cter in SUMO2) cross-links involve residues Lys-734 and Lys-739. Residues Ser-753 and Ser-840 each carry the phosphoserine modification. Residues Lys-918 and Lys-987 each participate in a glycyl lysine isopeptide (Lys-Gly) (interchain with G-Cter in SUMO2) cross-link. Residue Ser-988 is modified to Phosphoserine; by CHEK2. A Phosphoserine modification is found at Ser-1009. Lys-1079 is covalently cross-linked (Glycyl lysine isopeptide (Lys-Gly) (interchain with G-Cter in SUMO2)). At Ser-1143 the chain carries Phosphoserine; by ATR; in vitro. Residues 1181–1216 (VQKGELSRSPSPFTHTHLAQGYRRGAKKLESSEENL) are disordered. A phosphoserine mark is found at Ser-1189, Ser-1191, Ser-1211, Ser-1217, and Ser-1218. Residue Ser-1280 is modified to Phosphoserine; by ATR; in vitro. Positions 1322-1387 (KQMRHQSESQ…VSEDCSGLSS (66 aa)) are disordered. Ser-1328, Ser-1336, and Ser-1342 each carry phosphoserine. Residues 1373–1387 (ESETSVSEDCSGLSS) show a composition bias toward polar residues. Ser-1387 is subject to Phosphoserine; by ATM and ATR. Thr-1394 is subject to Phosphothreonine; by ATR; in vitro. The tract at residues 1397-1424 (RDTMQHNLIKLQQEMAELEAVLEQHGSQ) is interaction with PALB2. Ser-1423 is modified (phosphoserine; by ATM and ATR). Residues 1440-1505 (EDLRNPEQST…SSPSKCPSLD (66 aa)) form a disordered region. The segment covering 1445 to 1470 (PEQSTSEKAVLTSQKSSEYPISQNPE) has biased composition (polar residues). Ser-1457 bears the Phosphoserine; by ATR; in vitro mark. Ser-1524 is modified (phosphoserine; by ATM). Ser-1542 is subject to Phosphoserine. A disordered region spans residues 1565–1596 (ESGISLFSDDPESDPSEDRAPESARVGNIPSS). 2 consecutive BRCT domains span residues 1642–1736 (STER…DFEV) and 1756–1855 (QDRK…TYLI).

As to quaternary structure, heterodimer with BARD1. Part of the BRCA1-associated genome surveillance complex (BASC), which contains BRCA1, MSH2, MSH6, MLH1, ATM, BLM, PMS2 and the MRE11-RAD50-NBN protein (MRN) complex. This association could be a dynamic process changing throughout the cell cycle and within subnuclear domains. Component of the BRCA1-A complex, at least composed of BRCA1, BARD1, UIMC1/RAP80, ABRAXAS1, BRCC3/BRCC36, BABAM2 and BABAM1/NBA1. Interacts (via the BRCT domains) with ABRAXAS1 (phosphorylated form); this is important for recruitment to sites of DNA damage. Can form a heterotetramer with two molecules of ABRAXAS1 (phosphorylated form). Component of the BRCA1-RBBP8 complex. Interacts (via the BRCT domains) with RBBP8 ('Ser-327' phosphorylated form); the interaction ubiquitinates RBBP8, regulates CHEK1 activation, and involves RBBP8 in BRCA1-dependent G2/M checkpoint control on DNA damage. Associates with RNA polymerase II holoenzyme. Interacts with SMC1A, NELFB, DCLRE1C, CLSPN. Interacts with CHEK1, CHEK2, BAP1, BRCC3, UBXN1 and PCLAF. Interacts (via BRCT domains) with BRIP1 (phosphorylated form). Interacts with FANCD2 (ubiquitinated form). Interacts with H2AX (phosphorylated on 'Ser-140'). Interacts (via the BRCT domains) with ACACA (phosphorylated form); the interaction prevents dephosphorylation of ACACA. Part of a BRCA complex containing BRCA1, BRCA2 and PALB2. Interacts directly with PALB2; the interaction is essential for its function in HRR. Interacts directly with BRCA2; the interaction occurs only in the presence of PALB2 which serves as the bridging protein. Interacts (via the BRCT domains) with LMO4; the interaction represses the transcriptional activity of BRCA1. Interacts (via the BRCT domains) with CCAR2 (via N-terminus); the interaction represses the transcriptional activator activity of BRCA1. Interacts with EXD2. Interacts (via C-terminus) with DHX9; this interaction is direct and links BRCA1 to the RNA polymerase II holoenzyme. Interacts with DNA helicase ZGRF1; the interaction is increased following DNA damage induction. Post-translationally, phosphorylated in response to IR, UV, and various stimuli that cause checkpoint activation, probably by ATM or ATR. Phosphorylation at Ser-988 by CHEK2 regulates mitotic spindle assembly. Phosphorylation by AURKA regulates centrosomal microtubule nucleation. Autoubiquitinated, undergoes 'Lys-6'-linked polyubiquitination. 'Lys-6'-linked polyubiquitination does not promote degradation. Isoform 1 and isoform 3 are widely expressed. Isoform 3 is reduced or absent in several breast and ovarian cancer cell lines.

It is found in the nucleus. The protein localises to the chromosome. It localises to the cytoplasm. It catalyses the reaction S-ubiquitinyl-[E2 ubiquitin-conjugating enzyme]-L-cysteine + [acceptor protein]-L-lysine = [E2 ubiquitin-conjugating enzyme]-L-cysteine + N(6)-ubiquitinyl-[acceptor protein]-L-lysine.. The protein operates within protein modification; protein ubiquitination. The E3 ubiquitin-protein ligase activity is inhibited by phosphorylation by AURKA. Activity is increased by phosphatase treatment. Functionally, E3 ubiquitin-protein ligase that specifically mediates the formation of 'Lys-6'-linked polyubiquitin chains and plays a central role in DNA repair by facilitating cellular responses to DNA damage. It is unclear whether it also mediates the formation of other types of polyubiquitin chains. The BRCA1-BARD1 heterodimer coordinates a diverse range of cellular pathways such as DNA damage repair, ubiquitination and transcriptional regulation to maintain genomic stability. Regulates centrosomal microtubule nucleation. Required for appropriate cell cycle arrests after ionizing irradiation in both the S-phase and the G2 phase of the cell cycle. Required for FANCD2 targeting to sites of DNA damage. Inhibits lipid synthesis by binding to inactive phosphorylated ACACA and preventing its dephosphorylation. Contributes to homologous recombination repair (HRR) via its direct interaction with PALB2, fine-tunes recombinational repair partly through its modulatory role in the PALB2-dependent loading of BRCA2-RAD51 repair machinery at DNA breaks. Component of the BRCA1-RBBP8 complex which regulates CHEK1 activation and controls cell cycle G2/M checkpoints on DNA damage via BRCA1-mediated ubiquitination of RBBP8. Acts as a transcriptional activator. The protein is Breast cancer type 1 susceptibility protein (BRCA1) of Homo sapiens (Human).